A 259-amino-acid polypeptide reads, in one-letter code: Proteasome subunit alpha (259 aa).

The protein belongs to the peptidase T1A family. As to quaternary structure, the 20S proteasome core is composed of 14 alpha and 14 beta subunits that assemble into four stacked heptameric rings, resulting in a barrel-shaped structure. The two inner rings, each composed of seven catalytic beta subunits, are sandwiched by two outer rings, each composed of seven alpha subunits. The catalytic chamber with the active sites is on the inside of the barrel. Has a gated structure, the ends of the cylinder being occluded by the N-termini of the alpha-subunits. Is capped at one or both ends by the proteasome regulatory ATPase, PAN.

The protein resides in the cytoplasm. With respect to regulation, the formation of the proteasomal ATPase PAN-20S proteasome complex, via the docking of the C-termini of PAN into the intersubunit pockets in the alpha-rings, triggers opening of the gate for substrate entry. Interconversion between the open-gate and close-gate conformations leads to a dynamic regulation of the 20S proteasome proteolysis activity. In terms of biological role, component of the proteasome core, a large protease complex with broad specificity involved in protein degradation. The polypeptide is Proteasome subunit alpha (Methanococcus maripaludis (strain DSM 14266 / JCM 13030 / NBRC 101832 / S2 / LL)).